A 98-amino-acid polypeptide reads, in one-letter code: NADH-ubiquinone oxidoreductase chain 4L (98 aa).

The next 3 membrane-spanning stretches (helical) occupy residues 1-21 (MSLI…GLLM), 29-49 (ALLC…LTAL), and 59-79 (MPII…ALLV).

This sequence belongs to the complex I subunit 4L family. As to quaternary structure, core subunit of respiratory chain NADH dehydrogenase (Complex I) which is composed of 45 different subunits.

It is found in the mitochondrion inner membrane. The catalysed reaction is a ubiquinone + NADH + 5 H(+)(in) = a ubiquinol + NAD(+) + 4 H(+)(out). In terms of biological role, core subunit of the mitochondrial membrane respiratory chain NADH dehydrogenase (Complex I) which catalyzes electron transfer from NADH through the respiratory chain, using ubiquinone as an electron acceptor. Part of the enzyme membrane arm which is embedded in the lipid bilayer and involved in proton translocation. This chain is NADH-ubiquinone oxidoreductase chain 4L (MT-ND4L), found in Hyperoodon ampullatus (Northern bottlenose whale).